The chain runs to 444 residues: Phosphoglucosamine mutase (444 aa).

S101 serves as the catalytic Phosphoserine intermediate. The Mg(2+) site is built by S101, D240, D242, and D244. S101 carries the phosphoserine modification.

It belongs to the phosphohexose mutase family. Mg(2+) serves as cofactor. Activated by phosphorylation.

The enzyme catalyses alpha-D-glucosamine 1-phosphate = D-glucosamine 6-phosphate. Functionally, catalyzes the conversion of glucosamine-6-phosphate to glucosamine-1-phosphate. The sequence is that of Phosphoglucosamine mutase from Aeromonas hydrophila subsp. hydrophila (strain ATCC 7966 / DSM 30187 / BCRC 13018 / CCUG 14551 / JCM 1027 / KCTC 2358 / NCIMB 9240 / NCTC 8049).